Reading from the N-terminus, the 686-residue chain is Cyclic nucleotide-gated channel alpha-1 (686 aa).

Over 1-165 the chain is Cytoplasmic; that stretch reads MKNNIINTQQ…PSGNTYYNWL (165 aa). Disordered stretches follow at residues 31–75 and 87–149; these read ENGA…PSQR and NVNN…EEKK. The segment covering 39 to 53 has biased composition (acidic residues); the sequence is SEDDDSASTSEESEN. The span at 110-124 shows a compositional bias: basic and acidic residues; sequence SKSDDKNENKNDPEK. Residues 125 to 134 show a composition bias toward basic residues; the sequence is KKKKKDKEKK. Residues 135-149 show a composition bias toward basic and acidic residues; it reads KKEEKSKDKKEEEKK. A helical membrane pass occupies residues 166–187; that stretch reads FCITLPVMYNWTMVIARACFDE. Residues 188 to 197 are Extracellular-facing; that stretch reads LQSDYLEYWL. The helical transmembrane segment at 198–218 threads the bilayer; sequence ILDYVSDIVYLIDMFVRTRTG. Residues 219–243 are Cytoplasmic-facing; that stretch reads YLEQGLLVKEELKLINKYKSNLQFK. The helical transmembrane segment at 244–262 threads the bilayer; the sequence is LDVLSLIPTDLLYFKLGWN. The Extracellular segment spans residues 263 to 267; sequence YPEIR. A helical membrane pass occupies residues 268 to 286; that stretch reads LNRLLRFSRMFEFFQRTET. Residues 287 to 293 lie on the Cytoplasmic side of the membrane; sequence RTNYPNI. The interval 291–399 is ion conduction pathway; it reads PNIFRISNLV…GNIGSMISNM (109 aa). A helical transmembrane segment spans residues 294 to 317; the sequence is FRISNLVMYIVIIIHWNACVFYSI. The Extracellular portion of the chain corresponds to 318-340; sequence SKAIGFGNDTWVYPDINDPEFGR. The N-linked (GlcNAc...) asparagine glycan is linked to Asn325. Transmembrane regions (helical) follow at residues 341–375 and 376–400; these read LARK…VFVV and VDFL…SNMN. Residues 358–361 form a selectivity filter region; sequence TIGE. Residues 401–477 are C-linker; sequence AARAEFQARI…DTLKKVRIFA (77 aa). Topologically, residues 401–686 are cytoplasmic; sequence AARAEFQARI…GAESGPIDST (286 aa). A cyclic nucleotide-binding domain region spans residues 481 to 601; it reads AGLLVELVLK…EEKGKQILMK (121 aa). 4 residues coordinate 3',5'-cyclic GMP: Gly541, Ser544, Arg557, and Thr558. Positions 557 and 558 each coordinate 3',5'-cyclic AMP. Residues 619–673 are a coiled coil; the sequence is LEEKVTRMEGSVDLLQTRFARILAEYESMQQKLKQRLTKVEKFLKPLIDTEFSSI.

It belongs to the cyclic nucleotide-gated cation channel (TC 1.A.1.5) family. CNGA1 subfamily. In terms of assembly, forms heterotetrameric channels composed of CNGA1 and CNGB1 subunits with 3:1 stoichiometry. May also form cyclic nucleotide-activated homotetrameric channels, that are efficiently activated by saturating cGMP, but poorly activated by saturating cAMP compared to the heterotetramer with CNGB1. The channel binds Ca(2+)-bound CALM1 via CaM1 and CaM2 regions of the CNGB1 subunit; this interaction modulates the affinity of the channel for cNMPs in response to intracellular Ca(2+) levels. In terms of tissue distribution, rod cells in the retina.

It localises to the cell membrane. It carries out the reaction Ca(2+)(in) = Ca(2+)(out). It catalyses the reaction Na(+)(in) = Na(+)(out). The catalysed reaction is K(+)(in) = K(+)(out). The enzyme catalyses NH4(+)(in) = NH4(+)(out). It carries out the reaction Rb(+)(in) = Rb(+)(out). It catalyses the reaction Li(+)(in) = Li(+)(out). The catalysed reaction is Cs(+)(in) = Cs(+)(out). Channel opening is activated by cGMP and at a much lesser extent by cAMP. Ca(2+) binding concominantly blocks monovalent cation currents. Inhibited by L-cis-diltiazem. Functionally, pore-forming subunit of the rod cyclic nucleotide-gated channel. Mediates rod photoresponses at dim light converting transient changes in intracellular cGMP levels into electrical signals. In the dark, cGMP levels are high and keep the channel open enabling a steady inward current carried by Na(+) and Ca(2+) ions that leads to membrane depolarization and neurotransmitter release from synaptic terminals. Upon photon absorption cGMP levels decline leading to channel closure and membrane hyperpolarization that ultimately slows neurotransmitter release and signals the presence of light, the end point of the phototransduction cascade. Conducts cGMP- and cAMP-gated ion currents, with permeability for monovalent and divalent cations. The selectivity for Ca(2+) over Na(+) increases with cGMP concentrations, whereas the selectivity among monovalent ions is independent of the cGMP levels. This is Cyclic nucleotide-gated channel alpha-1 from Homo sapiens (Human).